The following is a 619-amino-acid chain: Chaperone protein DnaK (619 aa).

Threonine 179 carries the post-translational modification Phosphothreonine; by autocatalysis. The interval glutamine 584–lysine 619 is disordered. Positions alanine 585–aspartate 605 are enriched in low complexity. Basic and acidic residues predominate over residues glycine 606 to lysine 619.

This sequence belongs to the heat shock protein 70 family.

Its function is as follows. Acts as a chaperone. In Elusimicrobium minutum (strain Pei191), this protein is Chaperone protein DnaK.